Consider the following 105-residue polypeptide: DNA-directed RNA polymerase subunit omega (105 aa).

Belongs to the RNA polymerase subunit omega family. The RNAP catalytic core consists of 2 alpha, 1 beta, 1 beta' and 1 omega subunit. When a sigma factor is associated with the core the holoenzyme is formed, which can initiate transcription.

It carries out the reaction RNA(n) + a ribonucleoside 5'-triphosphate = RNA(n+1) + diphosphate. Promotes RNA polymerase assembly. Latches the N- and C-terminal regions of the beta' subunit thereby facilitating its interaction with the beta and alpha subunits. The polypeptide is DNA-directed RNA polymerase subunit omega (Streptococcus equi subsp. zooepidemicus (strain MGCS10565)).